Consider the following 544-residue polypeptide: Chaperonin GroEL (544 aa).

ATP-binding positions include 29-32 (TLGP), 86-90 (DGTTT), glycine 413, 478-480 (NAA), and aspartate 494.

It belongs to the chaperonin (HSP60) family. Forms a cylinder of 14 subunits composed of two heptameric rings stacked back-to-back. Interacts with the co-chaperonin GroES.

The protein localises to the cytoplasm. It catalyses the reaction ATP + H2O + a folded polypeptide = ADP + phosphate + an unfolded polypeptide.. Its function is as follows. Together with its co-chaperonin GroES, plays an essential role in assisting protein folding. The GroEL-GroES system forms a nano-cage that allows encapsulation of the non-native substrate proteins and provides a physical environment optimized to promote and accelerate protein folding. The chain is Chaperonin GroEL from Lysinibacillus sphaericus (strain C3-41).